The primary structure comprises 446 residues: Plant intracellular Ras-group-related LRR protein 3 (446 aa).

A coiled-coil region spans residues 65–100; that stretch reads EACRAVVRLEETHDAYEALLQEAEGRLEAVYRSAME. The disordered stretch occupies residues 101-121; sequence GKDLEEPDGRDESAAAAAGDD. LRR repeat units follow at residues 138-160, 161-184, 185-207, 208-230, 232-254, 255-277, 279-300, 301-324, 325-347, and 349-371; these read GKPVESVRLVDRQLRHLPEAFGR, IQGLRVLDVSRNQLEVIPDAIGGL, DHLEELRLASNALISLPDSIGLL, LNLRILNVGSNRLRSLPDSISKC, SLIELDASYNGLAYLPTNIGYEL, VNLRKLWVHMNKLRSLPSSICEM, SLYLLDAHFNELCGLPSAIGKL, SSLEILNLSSNFSDLKDLPASFGD, LLNLRELDLSNNQIHALPDNFGR, and DKLEKLNLEQNPLSMPPMEIVNK. The short motif at 372 to 384 is the GVYW element; that stretch reads GVDAVKEYMLQRW.

This sequence belongs to the SHOC2 family. As to expression, widely expressed.

Leucine-rich repeat protein that likely mediates protein interactions, possibly in the context of signal transduction. This Oryza sativa subsp. japonica (Rice) protein is Plant intracellular Ras-group-related LRR protein 3 (IRL3).